We begin with the raw amino-acid sequence, 485 residues long: Pyruvate kinase (485 aa).

Arg-33 is a binding site for substrate. K(+)-binding residues include Asn-35, Ser-37, Asp-67, and Thr-68. 35–38 (NFSH) lines the ATP pocket. Positions 74 and 155 each coordinate ATP. Glu-221 contacts Mg(2+). 3 residues coordinate substrate: Gly-244, Asp-245, and Thr-277. Asp-245 is a Mg(2+) binding site.

This sequence belongs to the pyruvate kinase family. As to quaternary structure, homotetramer. It depends on Mg(2+) as a cofactor. Requires K(+) as cofactor.

The catalysed reaction is pyruvate + ATP = phosphoenolpyruvate + ADP + H(+). It participates in carbohydrate degradation; glycolysis; pyruvate from D-glyceraldehyde 3-phosphate: step 5/5. The sequence is that of Pyruvate kinase (pyk) from Chlamydia trachomatis serovar L2 (strain ATCC VR-902B / DSM 19102 / 434/Bu).